The following is a 348-amino-acid chain: NADH-ubiquinone oxidoreductase chain 2 (348 aa).

11 helical membrane-spanning segments follow: residues 1-21, 25-45, 60-80, 99-119, 124-144, 151-171, 178-197, 202-224, 239-259, 274-294, and 326-346; these read MNPY…TLTF, HWIL…PLMA, FLIQ…NAWI, MFAL…PEVL, LLTG…LIIQ, PLIL…SGLN, ILAY…IQYA, LIAL…VLSA, ILAA…PLTG, DLPA…FFYL, and LTIS…ILML.

The protein belongs to the complex I subunit 2 family. In terms of assembly, core subunit of respiratory chain NADH dehydrogenase (Complex I) which is composed of 45 different subunits.

It is found in the mitochondrion inner membrane. The enzyme catalyses a ubiquinone + NADH + 5 H(+)(in) = a ubiquinol + NAD(+) + 4 H(+)(out). In terms of biological role, core subunit of the mitochondrial membrane respiratory chain NADH dehydrogenase (Complex I) which catalyzes electron transfer from NADH through the respiratory chain, using ubiquinone as an electron acceptor. Essential for the catalytic activity and assembly of complex I. The protein is NADH-ubiquinone oxidoreductase chain 2 (mt-nd2) of Danio rerio (Zebrafish).